The chain runs to 808 residues: Ribosome biogenesis protein BOP1 homolog (808 aa).

2 stretches are compositionally biased toward low complexity: residues 1–25 (MTSP…LTPC) and 33–50 (ATSS…SSFD). The tract at residues 1–55 (MTSPKGKPSPKRSAPAPATAALTPCAEERTEGATSSASASASSHISSSFDSPRDD) is disordered. WD repeat units follow at residues 430–469 (GHTA…LMKR), 640–680 (KFSE…RRFK), 682–720 (SGGV…KPYK), 724–766 (SHKG…DYNK), and 777–808 (KHQR…AWTE).

Belongs to the WD repeat BOP1/ERB1 family.

The protein localises to the nucleus. Its subcellular location is the nucleolus. It is found in the nucleoplasm. Its function is as follows. Required for maturation of ribosomal RNAs and formation of the large ribosomal subunit. The protein is Ribosome biogenesis protein BOP1 homolog of Leishmania major.